The following is a 446-amino-acid chain: Iroquois homeobox protein 5a (446 aa).

The segment at residues 117–173 is a DNA-binding region (homeobox); that stretch reads NATRDATATLKAWLNEHRKNPYPTKGEKIMLAIITKMTLTQVSTWFANARRRLKKEN. The tract at residues 175–312 is disordered; sequence MTWTPRNRSE…IHSPPSAPKP (138 aa). Over residues 184–201 the composition is skewed to acidic residues; the sequence is EDEEEDENIDLEKNDDDE. Basic and acidic residues-rich tracts occupy residues 202–220 and 227–258; these read PNKP…DHKL and PCDR…RTDL. Polar residues-rich tracts occupy residues 264–274 and 293–303; these read KPTTSSPSVLQ and STGNSNVTSVI.

Belongs to the TALE/IRO homeobox family.

It is found in the nucleus. Functionally, transcription factor. Binds to consensus iroquois binding site (IBS) motifs 5'-ACANNTGT-3' or 5'-ACANNNTGT-3' in regulatory elements of target genes. Required, together with irx7, for hyoid joint formation; they act cell autonomously to repress expression of cartilage matrix genes, such as collagen col2a1a, within immature chondrocytes of the joint interzone. May compete with or modify Sox9a activity, thereby reducing Sox9a-mediated activation of col2a1a. Probably acts in the developing hyoid joint downstream of Bmp signaling. In concert with irx6a, plays a role in visual performance. The protein is Iroquois homeobox protein 5a (irx5a) of Danio rerio (Zebrafish).